A 264-amino-acid polypeptide reads, in one-letter code: Thymidylate synthase (264 aa).

Arginine 21 contributes to the dUMP binding site. Histidine 51 contributes to the (6R)-5,10-methylene-5,6,7,8-tetrahydrofolate binding site. Residue arginine 126 to arginine 127 participates in dUMP binding. The active-site Nucleophile is cysteine 146. Residues arginine 166–aspartate 169, asparagine 177, and histidine 207–tyrosine 209 each bind dUMP. Aspartate 169 lines the (6R)-5,10-methylene-5,6,7,8-tetrahydrofolate pocket. Residue alanine 263 participates in (6R)-5,10-methylene-5,6,7,8-tetrahydrofolate binding.

Belongs to the thymidylate synthase family. Bacterial-type ThyA subfamily. Homodimer.

It localises to the cytoplasm. The catalysed reaction is dUMP + (6R)-5,10-methylene-5,6,7,8-tetrahydrofolate = 7,8-dihydrofolate + dTMP. It functions in the pathway pyrimidine metabolism; dTTP biosynthesis. In terms of biological role, catalyzes the reductive methylation of 2'-deoxyuridine-5'-monophosphate (dUMP) to 2'-deoxythymidine-5'-monophosphate (dTMP) while utilizing 5,10-methylenetetrahydrofolate (mTHF) as the methyl donor and reductant in the reaction, yielding dihydrofolate (DHF) as a by-product. This enzymatic reaction provides an intracellular de novo source of dTMP, an essential precursor for DNA biosynthesis. This is Thymidylate synthase from Chromobacterium violaceum (strain ATCC 12472 / DSM 30191 / JCM 1249 / CCUG 213 / NBRC 12614 / NCIMB 9131 / NCTC 9757 / MK).